The sequence spans 63 residues: Large ribosomal subunit protein uL29 (63 aa).

The protein belongs to the universal ribosomal protein uL29 family.

This Vibrio vulnificus (strain CMCP6) protein is Large ribosomal subunit protein uL29.